Consider the following 483-residue polypeptide: Probable zinc metalloprotease PTRG_04977 (483 aa).

An N-terminal signal peptide occupies residues 1–18 (MLFRSALLSNVLLLPACA). 2 N-linked (GlcNAc...) asparagine glycosylation sites follow: Asn-96 and Asn-121. 3 residues coordinate Zn(2+): His-167, Asp-187, and Glu-220. A glycan (N-linked (GlcNAc...) asparagine) is linked at Asn-235. Position 247 (Asp-247) interacts with Zn(2+). N-linked (GlcNAc...) asparagine glycans are attached at residues Asn-310, Asn-362, Asn-401, Asn-411, and Asn-421. Residues 396–483 (PAMPRNVTID…KSPAVYPFPG (88 aa)) enclose the Fibronectin type-III domain.

The protein belongs to the peptidase M28 family. M28B subfamily. Zn(2+) is required as a cofactor.

The protein localises to the secreted. The protein is Probable zinc metalloprotease PTRG_04977 of Pyrenophora tritici-repentis (strain Pt-1C-BFP) (Wheat tan spot fungus).